Consider the following 240-residue polypeptide: Aspartate/glutamate leucyltransferase (240 aa).

Belongs to the R-transferase family. Bpt subfamily.

It is found in the cytoplasm. It carries out the reaction N-terminal L-glutamyl-[protein] + L-leucyl-tRNA(Leu) = N-terminal L-leucyl-L-glutamyl-[protein] + tRNA(Leu) + H(+). The catalysed reaction is N-terminal L-aspartyl-[protein] + L-leucyl-tRNA(Leu) = N-terminal L-leucyl-L-aspartyl-[protein] + tRNA(Leu) + H(+). In terms of biological role, functions in the N-end rule pathway of protein degradation where it conjugates Leu from its aminoacyl-tRNA to the N-termini of proteins containing an N-terminal aspartate or glutamate. This Thiobacillus denitrificans (strain ATCC 25259 / T1) protein is Aspartate/glutamate leucyltransferase.